A 216-amino-acid chain; its full sequence is Probable GTP-binding protein EngB (216 aa).

Positions 37–214 (GSVEIAFAGR…RAAMIRLLDE (178 aa)) constitute an EngB-type G domain. GTP-binding positions include 45 to 52 (GRSNVGKS), 72 to 76 (GRTQE), 92 to 95 (DMPG), 159 to 162 (TKAD), and 193 to 195 (TSS). Residues S52 and T74 each contribute to the Mg(2+) site.

The protein belongs to the TRAFAC class TrmE-Era-EngA-EngB-Septin-like GTPase superfamily. EngB GTPase family. Requires Mg(2+) as cofactor.

Necessary for normal cell division and for the maintenance of normal septation. The protein is Probable GTP-binding protein EngB of Rhodopseudomonas palustris (strain TIE-1).